Here is a 249-residue protein sequence, read N- to C-terminus: Diaminopimelate epimerase (249 aa).

Substrate is bound by residues N11 and N60. C69 functions as the Proton donor in the catalytic mechanism. Residues 70 to 71, N164, and 182 to 183 each bind substrate; these read GN and ER. Catalysis depends on C192, which acts as the Proton acceptor. 193 to 194 serves as a coordination point for substrate; that stretch reads GT.

This sequence belongs to the diaminopimelate epimerase family. Homodimer.

It localises to the cytoplasm. It catalyses the reaction (2S,6S)-2,6-diaminopimelate = meso-2,6-diaminopimelate. It functions in the pathway amino-acid biosynthesis; L-lysine biosynthesis via DAP pathway; DL-2,6-diaminopimelate from LL-2,6-diaminopimelate: step 1/1. Catalyzes the stereoinversion of LL-2,6-diaminopimelate (L,L-DAP) to meso-diaminopimelate (meso-DAP), a precursor of L-lysine and an essential component of the bacterial peptidoglycan. The polypeptide is Diaminopimelate epimerase (Campylobacter jejuni (strain RM1221)).